We begin with the raw amino-acid sequence, 216 residues long: 3-keto-L-gulonate-6-phosphate decarboxylase UlaD (216 aa).

Position 11 (aspartate 11) interacts with substrate. Positions 33 and 62 each coordinate Mg(2+). Arginine 192 contacts substrate.

Belongs to the HPS/KGPDC family. KGPDC subfamily. In terms of assembly, homodimer. Mg(2+) serves as cofactor.

It catalyses the reaction 3-dehydro-L-gulonate 6-phosphate + H(+) = L-xylulose 5-phosphate + CO2. It functions in the pathway cofactor degradation; L-ascorbate degradation; D-xylulose 5-phosphate from L-ascorbate: step 2/4. Functionally, catalyzes the decarboxylation of 3-keto-L-gulonate-6-P into L-xylulose-5-P. Is involved in the anaerobic L-ascorbate utilization. The protein is 3-keto-L-gulonate-6-phosphate decarboxylase UlaD of Salmonella choleraesuis (strain SC-B67).